Reading from the N-terminus, the 427-residue chain is Caspase recruitment domain-containing protein 8 (427 aa).

The tract at residues 1-23 is disordered; the sequence is MGIPTSSVSEEQESSEGQDSGDI. Residues 51-186 form a ZU5 region; it reads FLGPEGNVDV…FYAVLEKPSF (136 aa). An FIIND domain is found at 51–336; sequence FLGPEGNVDV…IQLGAASAPP (286 aa). The interval 187–336 is UPA; it reads SLMGILLRIA…IQLGAASAPP (150 aa). Residues 336–426 form the CARD domain; that stretch reads PAFSGAAFVK…YLVSYLRQQS (91 aa).

Interacts with DPP9; leading to inhibit activation of the inflammasome. DPP9 acts via formation of a ternary complex, composed of a DPP9 homodimer, one full-length CARD8 protein, and one cleaved C-terminus of CARD8 (Caspase recruitment domain-containing protein 8, C-terminus). Interacts with DPP8; leading to inhibit activation of the inflammasome, probably via formation of a ternary complex with DPP8. Interacts with NLRP3. Interacts with IKBKG/NEMO. Interacts with DRAL. Binds to caspase-1 (CASP1), CARD16/pseudo-ICE and CARD18/ICEBERG. Interacts with NLRP2 (via NACHT domain). In terms of assembly, interacts with the C-terminal part of CARD8 (Caspase recruitment domain-containing protein 8, C-terminus) in absence of pathogens and other damage-associated signals. As to quaternary structure, interacts with the N-terminal part of CARD8 (Caspase recruitment domain-containing protein 8, N-terminus) in absence of pathogens and other damage-associated signals. Homomultimer; forms the CARD8 inflammasome polymeric complex, a filament composed of homopolymers of this form in response to pathogens and other damage-associated signals. The CARD8 inflammasome polymeric complex directly recruits pro-caspase-1 (proCASP1) independently of PYCARD/ASC. Interacts (via CARD domain) with CASP1 (via CARD domain); leading to CASP1 activation. In terms of processing, undergoes autocatalytic processing within the FIIND domain to generate the N-terminal and C-terminal parts, which are associated non-covalently in absence of pathogens and other damage-associated signals. Ubiquitinated by the N-end rule pathway in response to pathogens and other damage-associated signals, leading to its degradation by the proteasome and subsequent release of the cleaved C-terminal part of the protein (Caspase recruitment domain-containing protein 8, C-terminus), which polymerizes and forms the CARD8 inflammasome.

The protein localises to the cytoplasm. Its subcellular location is the nucleus. It localises to the inflammasome. CARD8 inflammasome is inhibited by DPP8 and DPP9, which sequester the C-terminal fragment of CARD8 (Caspase recruitment domain-containing protein 8, C-terminus) in a ternary complex, thereby preventing CARD8 oligomerization and activation. CARD8 inflammasome is activated by Val-boroPro (Talabostat, PT-100), an inhibitor of dipeptidyl peptidases DPP8 and DPP9. Val-boroPro relieves inhibition of DPP8 and/or DPP9 by inducing the proteasome-mediated destruction of the N-terminal part of CARD8, releasing its C-terminal part from autoinhibition. Functionally, inflammasome sensor, which mediates inflammasome activation in response to various pathogen-associated signals, leading to subsequent pyroptosis of CD4(+) T-cells and macrophages. Inflammasomes are supramolecular complexes that assemble in the cytosol in response to pathogens and other damage-associated signals and play critical roles in innate immunity and inflammation. Acts as a recognition receptor (PRR): recognizes specific pathogens and other damage-associated signals, such as Val-boroPro inhibitor, and mediates CARD8 inflammasome activation. In response to pathogen-associated signals, the N-terminal part of CARD8 is degraded by the proteasome, releasing the cleaved C-terminal part of the protein (Caspase recruitment domain-containing protein 8, C-terminus), which polymerizes to initiate the formation of the inflammasome complex: the CARD8 inflammasome directly recruits pro-caspase-1 (proCASP1) independently of PYCARD/ASC and promotes caspase-1 (CASP1) activation, which subsequently cleaves and activates inflammatory cytokines IL1B and IL18 and gasdermin-D (GSDMD), leading to pyroptosis. Also acts as a negative regulator of the NLRP3 inflammasome. May also act as an inhibitor of NF-kappa-B activation. Constitutes the precursor of the CARD8 inflammasome, which mediates autoproteolytic processing within the FIIND domain to generate the N-terminal and C-terminal parts, which are associated non-covalently in absence of pathogens and other damage-associated signals. In terms of biological role, regulatory part that prevents formation of the CARD8 inflammasome: in absence of pathogens and other damage-associated signals, interacts with the C-terminal part of CARD8 (Caspase recruitment domain-containing protein 8, C-terminus), preventing activation of the CARD8 inflammasome. In response to pathogen-associated signals, this part is ubiquitinated by the N-end rule pathway and degraded by the proteasome, releasing the cleaved C-terminal part of the protein, which polymerizes and forms the CARD8 inflammasome. Its function is as follows. Constitutes the active part of the CARD8 inflammasome. In absence of pathogens and other damage-associated signals, interacts with the N-terminal part of CARD8 (Caspase recruitment domain-containing protein 8, N-terminus), preventing activation of the CARD8 inflammasome. In response to pathogen-associated signals, the N-terminal part of CARD8 is degraded by the proteasome, releasing this form, which polymerizes to form the CARD8 inflammasome complex: the CARD8 inflammasome complex then directly recruits pro-caspase-1 (proCASP1) and promotes caspase-1 (CASP1) activation, leading to gasdermin-D (GSDMD) cleavage and subsequent pyroptosis. This chain is Caspase recruitment domain-containing protein 8, found in Pongo abelii (Sumatran orangutan).